The primary structure comprises 231 residues: ATP phosphoribosyltransferase (231 aa).

Belongs to the ATP phosphoribosyltransferase family. Short subfamily. As to quaternary structure, heteromultimer composed of HisG and HisZ subunits.

It localises to the cytoplasm. It catalyses the reaction 1-(5-phospho-beta-D-ribosyl)-ATP + diphosphate = 5-phospho-alpha-D-ribose 1-diphosphate + ATP. The protein operates within amino-acid biosynthesis; L-histidine biosynthesis; L-histidine from 5-phospho-alpha-D-ribose 1-diphosphate: step 1/9. Functionally, catalyzes the condensation of ATP and 5-phosphoribose 1-diphosphate to form N'-(5'-phosphoribosyl)-ATP (PR-ATP). Has a crucial role in the pathway because the rate of histidine biosynthesis seems to be controlled primarily by regulation of HisG enzymatic activity. The protein is ATP phosphoribosyltransferase of Brucella anthropi (strain ATCC 49188 / DSM 6882 / CCUG 24695 / JCM 21032 / LMG 3331 / NBRC 15819 / NCTC 12168 / Alc 37) (Ochrobactrum anthropi).